The primary structure comprises 414 residues: Glyco-Gag protein (414 aa).

Over 1 to 51 (MSGASSGTAIGAHLFGVSPECRVLIGDEGAGPSKSLSEVSFSVWYQSRAAR) the chain is Cytoplasmic. A helical transmembrane segment spans residues 52-72 (LVIFCLVASFLVPCLTFLIAE). Residues 73–414 (TVMGQTIATP…TNLAQVKQVV (342 aa)) are Extracellular-facing. A glycan (N-linked (GlcNAc...) asparagine; by host) is linked at asparagine 134. Positions 171 to 282 (VRPFLPPPKP…LREGPNNRPQ (112 aa)) are disordered. Residues 174-193 (FLPPPKPPTPLPQPLSPQPS) are compositionally biased toward pro residues. A compositionally biased stretch (low complexity) spans 194-206 (APLTSSLYPVLPK). The segment covering 210–220 (PKPPVLPPDPS) has biased composition (pro residues).

Glycosylated by host. In terms of processing, cleaved by host near the middle of the molecule, releasing the c-terminal half containing capsid and nucleoprotein domains op GAG.

It localises to the host cell membrane. Plays a role in viral particle release. Presumably acts by facilitating the fission of the virion bud at the cell surface. This chain is Glyco-Gag protein, found in Felidae (cat family).